We begin with the raw amino-acid sequence, 393 residues long: Short-chain dehydrogenase/reductase family 42E member 1 (393 aa).

Tyr-152 serves as the catalytic Proton acceptor. Lys-156 provides a ligand contact to NAD(+). 2 consecutive transmembrane segments (helical) span residues 282–302 (LPLT…FILG) and 371–391 (GLLV…SVIL).

This sequence belongs to the 3-beta-HSD family.

The protein resides in the membrane. This Macaca fascicularis (Crab-eating macaque) protein is Short-chain dehydrogenase/reductase family 42E member 1 (SDR42E1).